A 391-amino-acid polypeptide reads, in one-letter code: Terminal nucleotidyltransferase 5C (391 aa).

It belongs to the TENT family. Interacts with BCCIP and PABPC1; the interaction has no effect on TENT5C poly(A) polymerase function. Interacts with PLK4; this interaction leads to the TENT5C recruitment into the centrosome.

The protein localises to the nucleus. It localises to the cytoplasm. Its subcellular location is the cytoskeleton. It is found in the microtubule organizing center. The protein resides in the centrosome. It carries out the reaction RNA(n) + ATP = RNA(n)-3'-adenine ribonucleotide + diphosphate. In terms of biological role, catalyzes the transfer of one adenosine molecule from an ATP to an mRNA poly(A) tail bearing a 3'-OH terminal group and enhances mRNA stability and gene expression. Can also elongate RNA oligos ending with uridine molecule, provided that the sequence is adenosine-rich. Mainly targets mRNAs encoding endoplasmic reticulum-targeted protein. Its function is as follows. (Microbial infection) Seems to enhance replication of some viruses, including yellow fever virus, in response to type I interferon. The sequence is that of Terminal nucleotidyltransferase 5C from Homo sapiens (Human).